A 1010-amino-acid polypeptide reads, in one-letter code: Phosphoenolpyruvate carboxylase (1010 aa).

Residues 1–18 (MIMRSPETSGASMPQSTA) are compositionally biased toward polar residues. Disordered stretches follow at residues 1–36 (MIMRSPETSGASMPQSTAHVPDGEQPRASGGSPGAG) and 132–154 (LRPSRSQDDETAAPFDPFAPPLA). Active-site residues include His-195 and Lys-652. A disordered region spans residues 967 to 986 (QNRQPPMSESPGTPEDRRTY).

It belongs to the PEPCase type 1 family. The cofactor is Mg(2+).

The catalysed reaction is oxaloacetate + phosphate = phosphoenolpyruvate + hydrogencarbonate. Forms oxaloacetate, a four-carbon dicarboxylic acid source for the tricarboxylic acid cycle. In Parasynechococcus marenigrum (strain WH8102), this protein is Phosphoenolpyruvate carboxylase.